The sequence spans 339 residues: Dehydrogenase/reductase SDR family member 7 (339 aa).

Residues 1–28 (MNWELLLWLLVLCALLLLLVQLLRFLRA) form the signal peptide. Residues Ser60 and Ile62 each coordinate NAD(+). Ser190 serves as a coordination point for substrate. NAD(+) is bound by residues Tyr203, Lys207, and Ser239. Tyr203 serves as the catalytic Proton acceptor.

The protein belongs to the short-chain dehydrogenases/reductases (SDR) family. In terms of tissue distribution, found predominantly in the adrenal glands, liver, thyroid, prostate, small intestine, colon, stomach, kidney and brain. Lower levels observed in skeletal muscle, the lung and the spleen.

The protein resides in the endoplasmic reticulum membrane. It carries out the reaction all-trans-retinol + NADP(+) = all-trans-retinal + NADPH + H(+). The catalysed reaction is 5alpha-androstane-3alpha,17beta-diol + NADP(+) = 17beta-hydroxy-5alpha-androstan-3-one + NADPH + H(+). In terms of biological role, NADPH-dependent oxidoreductase which catalyzes the reduction of a variety of compounds bearing carbonyl groups including steroids, retinoids and xenobiotics. Catalyzes the reduction/inactivation of 5alpha-dihydrotestosterone to 3alpha-androstanediol, with a possible role in the modulation of androgen receptor function. Involved in the reduction of all-trans-retinal to all-trans-retinol. Converts cortisone to 20beta-dihydrocortisone in vitro, although the physiological relevance of this activity is questionable. Reduces exogenous compounds such as quinones (1,2-naphtoquinone, 9,10-phenantrenequinone and benzoquinone) and other xenobiotics (alpha-diketones) in vitro, suggesting a role in the biotransformation of xenobiotics with carbonyl group. A dehydrogenase activity has not been detected so far. May play a role as tumor suppressor. The sequence is that of Dehydrogenase/reductase SDR family member 7 from Homo sapiens (Human).